Reading from the N-terminus, the 182-residue chain is Crossover junction endodeoxyribonuclease RuvC (182 aa).

Catalysis depends on residues Asp7, Glu69, and Asp141. Positions 7, 69, and 141 each coordinate Mg(2+).

The protein belongs to the RuvC family. As to quaternary structure, homodimer which binds Holliday junction (HJ) DNA. The HJ becomes 2-fold symmetrical on binding to RuvC with unstacked arms; it has a different conformation from HJ DNA in complex with RuvA. In the full resolvosome a probable DNA-RuvA(4)-RuvB(12)-RuvC(2) complex forms which resolves the HJ. The cofactor is Mg(2+).

The protein localises to the cytoplasm. It catalyses the reaction Endonucleolytic cleavage at a junction such as a reciprocal single-stranded crossover between two homologous DNA duplexes (Holliday junction).. In terms of biological role, the RuvA-RuvB-RuvC complex processes Holliday junction (HJ) DNA during genetic recombination and DNA repair. Endonuclease that resolves HJ intermediates. Cleaves cruciform DNA by making single-stranded nicks across the HJ at symmetrical positions within the homologous arms, yielding a 5'-phosphate and a 3'-hydroxyl group; requires a central core of homology in the junction. The consensus cleavage sequence is 5'-(A/T)TT(C/G)-3'. Cleavage occurs on the 3'-side of the TT dinucleotide at the point of strand exchange. HJ branch migration catalyzed by RuvA-RuvB allows RuvC to scan DNA until it finds its consensus sequence, where it cleaves and resolves the cruciform DNA. This Paracidovorax citrulli (strain AAC00-1) (Acidovorax citrulli) protein is Crossover junction endodeoxyribonuclease RuvC.